The sequence spans 174 residues: Dual-action ribosomal maturation protein DarP (174 aa).

Belongs to the DarP family.

Its subcellular location is the cytoplasm. Functionally, member of a network of 50S ribosomal subunit biogenesis factors which assembles along the 30S-50S interface, preventing incorrect 23S rRNA structures from forming. Promotes peptidyl transferase center (PTC) maturation. This is Dual-action ribosomal maturation protein DarP from Vibrio campbellii (strain ATCC BAA-1116).